A 125-amino-acid polypeptide reads, in one-letter code: SOSS complex subunit C homolog A (125 aa).

Polar residues predominate over residues Met-1–Lys-16. Disordered regions lie at residues Met-1–Glu-20, Ser-38–Asn-74, and Pro-105–Lys-125.

This sequence belongs to the SOSS-C family.

This chain is SOSS complex subunit C homolog A, found in Drosophila willistoni (Fruit fly).